A 397-amino-acid polypeptide reads, in one-letter code: Enoyl-[acyl-carrier-protein] reductase [NADH] (397 aa).

Residues 48–53 (GASTGY), 74–75 (FE), 111–112 (DA), and 139–140 (VA) each bind NAD(+). Y225 is a substrate binding site. Y235 acts as the Proton donor in catalysis. NAD(+) is bound by residues K244 and 273–275 (VVT).

Belongs to the TER reductase family. In terms of assembly, monomer.

The catalysed reaction is a 2,3-saturated acyl-[ACP] + NAD(+) = a (2E)-enoyl-[ACP] + NADH + H(+). It participates in lipid metabolism; fatty acid biosynthesis. In terms of biological role, involved in the final reduction of the elongation cycle of fatty acid synthesis (FAS II). Catalyzes the reduction of a carbon-carbon double bond in an enoyl moiety that is covalently linked to an acyl carrier protein (ACP). The protein is Enoyl-[acyl-carrier-protein] reductase [NADH] of Burkholderia thailandensis (strain ATCC 700388 / DSM 13276 / CCUG 48851 / CIP 106301 / E264).